Reading from the N-terminus, the 218-residue chain is uncharacterized protein (218 aa).

A compositionally biased stretch (basic and acidic residues) spans 184 to 202 (MDREEKRKEKEEKRKRELA). The interval 184-218 (MDREEKRKEKEEKRKRELAARQLKRQEKKKQKTSK) is disordered. Positions 205–218 (QLKRQEKKKQKTSK) are enriched in basic residues.

This is an uncharacterized protein from Mycoplasma pneumoniae (strain ATCC 29342 / M129 / Subtype 1) (Mycoplasmoides pneumoniae).